We begin with the raw amino-acid sequence, 489 residues long: Equilibrative nucleobase transporter 1 (489 aa).

Residues 17-37 form a helical membrane-spanning segment; the sequence is LLECLGFAGVLFGWTSLVFVF. The N-linked (GlcNAc...) asparagine glycan is linked to asparagine 56. A run of 4 helical transmembrane segments spans residues 72–92, 102–122, 123–143, and 158–180; these read LIFT…GYIF, LIAI…SADS, AVLL…FLIT, and IITM…KLLY. Serine 253 is modified (phosphoserine). Threonine 258 carries the phosphothreonine modification. 6 consecutive transmembrane segments (helical) span residues 277–297, 318–338, 358–380, 402–422, 426–446, and 455–475; these read FAWH…FIGT, NAFA…GLLM, AAAL…GFAV, SFLY…EHFG, GLVM…FTLI, and LYVN…PFLV.

The protein belongs to the SLC43A transporter (TC 2.A.1.44) family.

It is found in the basolateral cell membrane. The enzyme catalyses adenine(out) = adenine(in). It carries out the reaction guanine(out) = guanine(in). It catalyses the reaction hypoxanthine(out) = hypoxanthine(in). In terms of biological role, sodium-independent purine-selective nucleobase transporter which mediates the equilibrative transport of extracellular purine nucleobases such as adenine, guanine and hypoxanthine. May regulate fatty acid (FA) transport in adipocytes, acting as a positive regulator of FA efflux and as a negative regulator of FA uptake. In Bos taurus (Bovine), this protein is Equilibrative nucleobase transporter 1 (SLC43A3).